The chain runs to 509 residues: tRNA-2-methylthio-N(6)-dimethylallyladenosine synthase (509 aa).

Residues 1–15 (MNEQQRLASQQVNSS) show a composition bias toward polar residues. Residues 1–26 (MNEQQRLASQQVNSSTKKEEKDYSKY) are disordered. A compositionally biased stretch (basic and acidic residues) spans 16-25 (TKKEEKDYSK). An MTTase N-terminal domain is found at 66-184 (RKFYIRTYGC…LPYILKDAMF (119 aa)). Cys75, Cys111, Cys145, Cys221, Cys225, and Cys228 together coordinate [4Fe-4S] cluster. A Radical SAM core domain is found at 207–437 (RRGDIKAWVN…NALVNKLAIE (231 aa)). One can recognise a TRAM domain in the interval 440-503 (DRYKGQIVEV…TWSLNGELVE (64 aa)).

This sequence belongs to the methylthiotransferase family. MiaB subfamily. As to quaternary structure, monomer. [4Fe-4S] cluster is required as a cofactor.

It is found in the cytoplasm. It carries out the reaction N(6)-dimethylallyladenosine(37) in tRNA + (sulfur carrier)-SH + AH2 + 2 S-adenosyl-L-methionine = 2-methylsulfanyl-N(6)-dimethylallyladenosine(37) in tRNA + (sulfur carrier)-H + 5'-deoxyadenosine + L-methionine + A + S-adenosyl-L-homocysteine + 2 H(+). Its function is as follows. Catalyzes the methylthiolation of N6-(dimethylallyl)adenosine (i(6)A), leading to the formation of 2-methylthio-N6-(dimethylallyl)adenosine (ms(2)i(6)A) at position 37 in tRNAs that read codons beginning with uridine. The sequence is that of tRNA-2-methylthio-N(6)-dimethylallyladenosine synthase from Bacillus cereus (strain ZK / E33L).